The following is a 385-amino-acid chain: Galactokinase (385 aa).

34-37 (EHTD) lines the substrate pocket. Residue 124-130 (SSGLSSS) coordinates ATP. Positions 130 and 162 each coordinate Mg(2+). The active-site Proton acceptor is the Asp174. Tyr223 serves as a coordination point for substrate.

This sequence belongs to the GHMP kinase family. GalK subfamily.

It localises to the cytoplasm. The enzyme catalyses alpha-D-galactose + ATP = alpha-D-galactose 1-phosphate + ADP + H(+). The protein operates within carbohydrate metabolism; galactose metabolism. Catalyzes the transfer of the gamma-phosphate of ATP to D-galactose to form alpha-D-galactose-1-phosphate (Gal-1-P). This is Galactokinase from Mannheimia succiniciproducens (strain KCTC 0769BP / MBEL55E).